Consider the following 149-residue polypeptide: Large ribosomal subunit protein bL9 (149 aa).

This sequence belongs to the bacterial ribosomal protein bL9 family.

In terms of biological role, binds to the 23S rRNA. This chain is Large ribosomal subunit protein bL9, found in Aliivibrio salmonicida (strain LFI1238) (Vibrio salmonicida (strain LFI1238)).